The primary structure comprises 362 residues: uncharacterized protein (362 aa).

A compositionally biased stretch (basic and acidic residues) spans 314–323 (GEEKEPKQES). Residues 314 to 362 (GEEKEPKQESQEQLFNPFTIDEMLTEEQQQQQEEENNATEEEGDTVKLG) are disordered. Over residues 345 to 356 (QEEENNATEEEG) the composition is skewed to acidic residues.

This is an uncharacterized protein from Acidianus two-tailed virus (ATV).